The sequence spans 125 residues: Phosphoribosyl-AMP cyclohydrolase (125 aa).

Asp-74 is a Mg(2+) binding site. Cys-75 serves as a coordination point for Zn(2+). Asp-76 and Asp-78 together coordinate Mg(2+). The Zn(2+) site is built by Cys-92 and Cys-99.

It belongs to the PRA-CH family. In terms of assembly, homodimer. Mg(2+) serves as cofactor. The cofactor is Zn(2+).

It localises to the cytoplasm. It catalyses the reaction 1-(5-phospho-beta-D-ribosyl)-5'-AMP + H2O = 1-(5-phospho-beta-D-ribosyl)-5-[(5-phospho-beta-D-ribosylamino)methylideneamino]imidazole-4-carboxamide. Its pathway is amino-acid biosynthesis; L-histidine biosynthesis; L-histidine from 5-phospho-alpha-D-ribose 1-diphosphate: step 3/9. In terms of biological role, catalyzes the hydrolysis of the adenine ring of phosphoribosyl-AMP. The sequence is that of Phosphoribosyl-AMP cyclohydrolase from Geotalea uraniireducens (strain Rf4) (Geobacter uraniireducens).